The primary structure comprises 665 residues: Long chain acyl-CoA synthetase 3 (665 aa).

ATP is bound at residue 228–239; that stretch reads IMYTSGTTGDPK. A fatty acid-binding region spans residues 495–519; that stretch reads DGWLHTGDVGEWQPDGAMKIIDRKK.

The protein belongs to the ATP-dependent AMP-binding enzyme family. Requires Mg(2+) as cofactor.

It catalyses the reaction a long-chain fatty acid + ATP + CoA = a long-chain fatty acyl-CoA + AMP + diphosphate. It functions in the pathway lipid metabolism; fatty acid metabolism. Its function is as follows. Activation of long-chain fatty acids for both synthesis of cellular lipids, and degradation via beta-oxidation. Preferentially uses palmitate, palmitoleate, oleate and linoleate. The chain is Long chain acyl-CoA synthetase 3 (LACS3) from Arabidopsis thaliana (Mouse-ear cress).